The primary structure comprises 240 residues: Demethylmenaquinone methyltransferase (240 aa).

S-adenosyl-L-methionine is bound by residues Thr62, Asp80, 102-103 (DA), and Ser119.

The protein belongs to the class I-like SAM-binding methyltransferase superfamily. MenG/UbiE family.

The enzyme catalyses a 2-demethylmenaquinol + S-adenosyl-L-methionine = a menaquinol + S-adenosyl-L-homocysteine + H(+). The protein operates within quinol/quinone metabolism; menaquinone biosynthesis; menaquinol from 1,4-dihydroxy-2-naphthoate: step 2/2. In terms of biological role, methyltransferase required for the conversion of demethylmenaquinol (DMKH2) to menaquinol (MKH2). The chain is Demethylmenaquinone methyltransferase from Beutenbergia cavernae (strain ATCC BAA-8 / DSM 12333 / CCUG 43141 / JCM 11478 / NBRC 16432 / NCIMB 13614 / HKI 0122).